The primary structure comprises 256 residues: 1-(5-phosphoribosyl)-5-[(5-phosphoribosylamino)methylideneamino] imidazole-4-carboxamide isomerase (256 aa).

The active-site Proton acceptor is the Asp-8. Residue Asp-129 is the Proton donor of the active site.

This sequence belongs to the HisA/HisF family.

The protein localises to the cytoplasm. The enzyme catalyses 1-(5-phospho-beta-D-ribosyl)-5-[(5-phospho-beta-D-ribosylamino)methylideneamino]imidazole-4-carboxamide = 5-[(5-phospho-1-deoxy-D-ribulos-1-ylimino)methylamino]-1-(5-phospho-beta-D-ribosyl)imidazole-4-carboxamide. Its pathway is amino-acid biosynthesis; L-histidine biosynthesis; L-histidine from 5-phospho-alpha-D-ribose 1-diphosphate: step 4/9. The sequence is that of 1-(5-phosphoribosyl)-5-[(5-phosphoribosylamino)methylideneamino] imidazole-4-carboxamide isomerase from Prochlorococcus marinus (strain NATL2A).